We begin with the raw amino-acid sequence, 389 residues long: Phospho-N-acetylmuramoyl-pentapeptide-transferase (389 aa).

The next 10 membrane-spanning stretches (helical) occupy residues 25–45, 73–93, 97–117, 135–155, 190–210, 222–242, 258–278, 286–306, 311–331, and 366–386; these read RAVMATITALGIGLVCGPWVI, TMGGVLILIGIAVATLLWGDL, FIWIVMLVTFGFGVIGWVDDY, FWQSVIGLFAAVYLAFSVSEA, ISYPLGVWGFIVLTYFVIVGA, GLVIMPVVLVGASLGVFAYVM, GAGELLIFCSAMGGAGLAFLW, VFMGDVGALALGGALGTVAVI, IVLFIMGGIFVAETLSVMLQV, and QVVVRFWIITLMLCLFGLSTL.

It belongs to the glycosyltransferase 4 family. MraY subfamily. It depends on Mg(2+) as a cofactor.

It is found in the cell inner membrane. It carries out the reaction UDP-N-acetyl-alpha-D-muramoyl-L-alanyl-gamma-D-glutamyl-meso-2,6-diaminopimeloyl-D-alanyl-D-alanine + di-trans,octa-cis-undecaprenyl phosphate = di-trans,octa-cis-undecaprenyl diphospho-N-acetyl-alpha-D-muramoyl-L-alanyl-D-glutamyl-meso-2,6-diaminopimeloyl-D-alanyl-D-alanine + UMP. Its pathway is cell wall biogenesis; peptidoglycan biosynthesis. Catalyzes the initial step of the lipid cycle reactions in the biosynthesis of the cell wall peptidoglycan: transfers peptidoglycan precursor phospho-MurNAc-pentapeptide from UDP-MurNAc-pentapeptide onto the lipid carrier undecaprenyl phosphate, yielding undecaprenyl-pyrophosphoryl-MurNAc-pentapeptide, known as lipid I. This chain is Phospho-N-acetylmuramoyl-pentapeptide-transferase, found in Burkholderia vietnamiensis (strain G4 / LMG 22486) (Burkholderia cepacia (strain R1808)).